A 176-amino-acid polypeptide reads, in one-letter code: NAD(P)H-quinone oxidoreductase subunit 6, chloroplastic (176 aa).

Helical transmembrane passes span 10–30, 32–52, 61–81, 92–112, and 152–172; these read FLLV…VLLP, PIFS…LYIL, AQLL…VMFM, LWTV…FSLM, and FFLP…GAIS.

The protein belongs to the complex I subunit 6 family. In terms of assembly, NDH is composed of at least 16 different subunits, 5 of which are encoded in the nucleus.

It localises to the plastid. The protein resides in the chloroplast thylakoid membrane. It carries out the reaction a plastoquinone + NADH + (n+1) H(+)(in) = a plastoquinol + NAD(+) + n H(+)(out). The enzyme catalyses a plastoquinone + NADPH + (n+1) H(+)(in) = a plastoquinol + NADP(+) + n H(+)(out). Its function is as follows. NDH shuttles electrons from NAD(P)H:plastoquinone, via FMN and iron-sulfur (Fe-S) centers, to quinones in the photosynthetic chain and possibly in a chloroplast respiratory chain. The immediate electron acceptor for the enzyme in this species is believed to be plastoquinone. Couples the redox reaction to proton translocation, and thus conserves the redox energy in a proton gradient. The protein is NAD(P)H-quinone oxidoreductase subunit 6, chloroplastic (ndhG) of Nasturtium officinale (Watercress).